Consider the following 119-residue polypeptide: Large ribosomal subunit protein bL19 (119 aa).

This sequence belongs to the bacterial ribosomal protein bL19 family.

Its function is as follows. This protein is located at the 30S-50S ribosomal subunit interface and may play a role in the structure and function of the aminoacyl-tRNA binding site. The polypeptide is Large ribosomal subunit protein bL19 (Photobacterium profundum (strain SS9)).